The sequence spans 123 residues: uncharacterized protein (123 aa).

The disordered stretch occupies residues M1–G28. Residues K7–T20 are compositionally biased toward basic and acidic residues.

This sequence belongs to the TUSC2 family.

This is an uncharacterized protein from Caenorhabditis elegans.